Consider the following 408-residue polypeptide: Succinylornithine transaminase (408 aa).

K252 carries the N6-(pyridoxal phosphate)lysine modification.

It belongs to the class-III pyridoxal-phosphate-dependent aminotransferase family. AstC subfamily. The cofactor is pyridoxal 5'-phosphate.

It catalyses the reaction N(2)-succinyl-L-ornithine + 2-oxoglutarate = N-succinyl-L-glutamate 5-semialdehyde + L-glutamate. The protein operates within amino-acid degradation; L-arginine degradation via AST pathway; L-glutamate and succinate from L-arginine: step 3/5. Its function is as follows. Catalyzes the transamination of N(2)-succinylornithine and alpha-ketoglutarate into N(2)-succinylglutamate semialdehyde and glutamate. Can also act as an acetylornithine aminotransferase. The chain is Succinylornithine transaminase from Salmonella typhi.